The primary structure comprises 162 residues: NADH-ubiquinone oxidoreductase 24 kDa subunit homolog C11E3.12, mitochondrial (162 aa).

4 residues coordinate [2Fe-2S] cluster: Cys-88, Cys-93, Cys-125, and Cys-129.

Belongs to the complex I 24 kDa subunit family. [2Fe-2S] cluster serves as cofactor.

The protein localises to the mitochondrion. In Schizosaccharomyces pombe (strain 972 / ATCC 24843) (Fission yeast), this protein is NADH-ubiquinone oxidoreductase 24 kDa subunit homolog C11E3.12, mitochondrial.